Reading from the N-terminus, the 355-residue chain is Type II restriction enzyme CfrBI (355 aa).

It carries out the reaction Endonucleolytic cleavage of DNA to give specific double-stranded fragments with terminal 5'-phosphates.. In terms of biological role, a P subtype restriction enzyme that recognizes the double-stranded sequence 5'-CCWWGG-3' and cleaves after C-1. This is Type II restriction enzyme CfrBI from Citrobacter freundii.